Consider the following 395-residue polypeptide: Phosphatidylinositol 4-phosphate 5-kinase-like protein 1 (395 aa).

The interval 1–25 (MATPSLRSHEIPAHSQEAGNKSISS) is disordered. The region spanning 37–394 (ARQSRVGLFE…RLCRWAEVHT (358 aa)) is the PIPK domain.

Interacts with type I phosphatidylinositol 4-phosphate 5-kinases, including PIP5K1A and PIP5K1B. In terms of tissue distribution, highly expressed in brain and testis, relatively to heart, spleen, lung, liver, skeletal muscle and kidney.

The protein localises to the cytoplasm. It is found in the membrane. Its function is as follows. May act as a scaffold to localize and regulate type I phosphatidylinositol 4-phosphate 5-kinases to specific compartments within the cell, where they generate PI(4,5)P2 for actin nucleation, signaling and scaffold protein recruitment and conversion to PI(3,4,5)P3. In Mus musculus (Mouse), this protein is Phosphatidylinositol 4-phosphate 5-kinase-like protein 1 (Pip5kl1).